We begin with the raw amino-acid sequence, 344 residues long: C-C chemokine receptor-like 2 (344 aa).

Over 1 to 43 (MANYTLAPEDEYDVLIEGELESDEAEQCDRYDTWALSAQLVPS) the chain is Extracellular. N-linked (GlcNAc...) asparagine glycosylation is present at Asn-3. A helical transmembrane segment spans residues 44-64 (LCSAVFVVGVLDNLLVVLILV). Residues 65–74 (KYKGLKRVEN) are Cytoplasmic-facing. Residues 75–95 (IYLLNLAVSNLCFLLTLPFWA) form a helical membrane-spanning segment. Residues 96–104 (HAGGDPMCK) are Extracellular-facing. Cys-103 and Cys-181 are joined by a disulfide. The chain crosses the membrane as a helical span at residues 105-125 (ILIGLYFVGLYSETFFNCLLT). Topologically, residues 126–148 (LQRYLVFLHKGNFFSVRRRVPCG) are cytoplasmic. A helical transmembrane segment spans residues 149 to 169 (IVTSAVAWVTAILATVPEFAV). The Extracellular segment spans residues 170-198 (YKPQMEDPKYKCAFSRTPFLPADETFWKH). The chain crosses the membrane as a helical span at residues 199-219 (FLTLKMNVSVLVFPLFIFTFL). The Cytoplasmic segment spans residues 220–238 (YVQMRKTLRFGEQRYSLFK). A helical membrane pass occupies residues 239 to 259 (LVFAIMVVFLLMWAPYNIALF). The Extracellular segment spans residues 260–281 (LSTFKEHFSLSDCKSNYNLDKS). A helical transmembrane segment spans residues 282-302 (VLITKLIATTHCCVNPLLYVF). At 303–344 (LDGTFRKYLCRFFHRRSNTPRQPRRRFAQGTSREEPDRSTEV) the chain is on the cytoplasmic side. The interval 323 to 344 (RQPRRRFAQGTSREEPDRSTEV) is disordered. Basic and acidic residues predominate over residues 334-344 (SREEPDRSTEV).

It belongs to the G-protein coupled receptor 1 family.

Its subcellular location is the cell membrane. In terms of biological role, receptor for CCL19 and chemerin/RARRES2. Does not appear to be a signaling receptor, but may have a role in modulating chemokine-triggered immune responses by capturing and internalizing CCL19 or by presenting RARRES2 ligand to CMKLR1, a functional signaling receptor. Plays a critical role for the development of Th2 responses. The chain is C-C chemokine receptor-like 2 (CCRL2) from Macaca mulatta (Rhesus macaque).